Reading from the N-terminus, the 214-residue chain is Large ribosomal subunit protein uL3 (214 aa).

Residues 119-159 (GVKRHGFAGGPKTHGQSDRHRAPGSIGPTTDPGRVHKGKRM) are disordered.

Belongs to the universal ribosomal protein uL3 family. As to quaternary structure, part of the 50S ribosomal subunit. Forms a cluster with proteins L14 and L19.

Its function is as follows. One of the primary rRNA binding proteins, it binds directly near the 3'-end of the 23S rRNA, where it nucleates assembly of the 50S subunit. The protein is Large ribosomal subunit protein uL3 of Thermomicrobium roseum (strain ATCC 27502 / DSM 5159 / P-2).